The sequence spans 528 residues: Capsid scaffolding protein (528 aa).

Residues H46, S116, and H135 each act as charge relay system in the active site. The interaction with pAP stretch occupies residues 270–288 (HGNYDAVESATATTAMSNQ). A disordered region spans residues 394–431 (KKRHFQSDSEDELSFPGDPEYTKKRRRHRVDNDDDKEM). The Nuclear localization signal motif lies at 416–422 (KKRRRHR). Residues 508–528 (STDLLKLNKKLFVDALNKMDS) are interaction with major capsid protein.

Belongs to the herpesviridae capsid scaffolding protein family. In terms of assembly, homomultimer. Interacts with major capsid protein. As to quaternary structure, exists in a monomer-dimer equilibrium with the dimer being the active species. Post-translationally, capsid scaffolding protein is cleaved by assemblin after formation of the spherical procapsid. As a result, the capsid obtains its mature, icosahedral shape. Cleavages occur at two or more sites: release (R-site) and maturation (M-site).

It localises to the host cytoplasm. Its subcellular location is the host nucleus. It carries out the reaction Cleaves -Ala-|-Ser- and -Ala-|-Ala- bonds in the scaffold protein.. Its function is as follows. Acts as a scaffold protein by binding major capsid protein in the cytoplasm, inducing the nuclear localization of both proteins. Multimerizes in the nucleus such as major capsid protein forms the icosahedral T=16 capsid. Autocatalytic cleavage releases the assembly protein, and subsequently abolishes interaction with major capsid protein. Cleavages products are evicted from the capsid before or during DNA packaging. In terms of biological role, protease that plays an essential role in virion assembly within the nucleus. Catalyzes the cleavage of the assembly protein after formation of the spherical procapsid. By that cleavage, the capsid matures and gains its icosahedral shape. The cleavage sites seem to include -Ala-Ser-, -Ala-Ala-, as well as Ala-Thr bonds. Assemblin and cleavages products are evicted from the capsid before or during DNA packaging. Plays a major role in capsid assembly. Acts as a scaffold protein by binding major capsid protein. Multimerizes in the nucleus such as major capsid protein forms the icosahedral T=16 capsid. Cleaved by assemblin after capsid completion. The cleavages products are evicted from the capsid before or during DNA packaging. This chain is Capsid scaffolding protein (U53), found in Homo sapiens (Human).